Here is a 525-residue protein sequence, read N- to C-terminus: Glutathione hydrolase-like YwrD proenzyme (525 aa).

The active-site Nucleophile is the threonine 339.

The protein belongs to the gamma-glutamyltransferase family. In terms of assembly, this enzyme consists of two polypeptide chains, which are synthesized from a single polypeptide. In terms of processing, cleaved by autocatalysis into a large and a small subunit.

It catalyses the reaction an N-terminal (5-L-glutamyl)-[peptide] + an alpha-amino acid = 5-L-glutamyl amino acid + an N-terminal L-alpha-aminoacyl-[peptide]. It carries out the reaction glutathione + H2O = L-cysteinylglycine + L-glutamate. The enzyme catalyses an S-substituted glutathione + H2O = an S-substituted L-cysteinylglycine + L-glutamate. Overexpressed protein with an N-terminal His tag has been reported not to hydrolyze glutathione; it is not clear if the construct is processed to 2 subunits. This chain is Glutathione hydrolase-like YwrD proenzyme (ywrD), found in Bacillus subtilis (strain 168).